Consider the following 35-residue polypeptide: UPF0387 membrane protein YohO (35 aa).

Residues 6-26 (IGVIALFLFMAFGGIGGVMLA) form a helical membrane-spanning segment.

This sequence belongs to the UPF0387 family.

The protein localises to the cell inner membrane. In Escherichia coli O8 (strain IAI1), this protein is UPF0387 membrane protein YohO.